Here is a 203-residue protein sequence, read N- to C-terminus: HTH-type transcriptional regulator CymR (203 aa).

In terms of domain architecture, HTH tetR-type spans 13-73 (METQGKLIAA…ATFEWLYEQI (61 aa)). Residues 36–55 (RIADVPGAAGVSRGAQSHHF) constitute a DNA-binding region (H-T-H motif).

Its function is as follows. Involved in the repression of the cym and cmt operons which are responsible of the p-cymene degradation. The protein is HTH-type transcriptional regulator CymR of Pseudomonas putida (Arthrobacter siderocapsulatus).